A 552-amino-acid polypeptide reads, in one-letter code: Hyaluronan synthase 2 (552 aa).

At 1–11 (MHCERFLCILR) the chain is on the cytoplasmic side. Residues 12-32 (IIGTTLFGVSLLLGITAAYIV) form a helical membrane-spanning segment. At 33 to 45 (GYQFIQTDNYYFS) the chain is on the extracellular side. Residues 46–66 (FGLYGAFLASHLIIQSLFAFL) traverse the membrane as a helical segment. Topologically, residues 67–374 (EHRKMKKSLE…NAMWFHKHHL (308 aa)) are cytoplasmic. The residue at position 110 (threonine 110) is a Phosphothreonine. Lysine 190 participates in a covalent cross-link: Glycyl lysine isopeptide (Lys-Gly) (interchain with G-Cter in ubiquitin). Serine 221 carries O-linked (GlcNAc) serine glycosylation. The residue at position 328 (threonine 328) is a Phosphothreonine. A helical membrane pass occupies residues 375-395 (WMTYEAIITGFFPFFLIATVI). Residues 396 to 402 (QLFYRGK) lie on the Extracellular side of the membrane. The helical transmembrane segment at 403–423 (IWNILLFLLTVQLVGLIKSSF) threads the bilayer. At 424 to 429 (ASCLRG) the chain is on the cytoplasmic side. A helical membrane pass occupies residues 430 to 450 (NIVMVFMSLYSVLYMSSLLPA). The Extracellular segment spans residues 451-475 (KMFAIATINKAGWGTSGRKTIVVNF). A helical transmembrane segment spans residues 476-496 (IGLIPVSVWFTILLGGVIFTI). Residues 497 to 510 (YKESKRPFSESKQT) are Cytoplasmic-facing. A helical membrane pass occupies residues 511–531 (VLIVGTLLYACYWVMLLTLYV). At 532–552 (VLINKCGRRKKGQQYDMVLDV) the chain is on the extracellular side.

The protein belongs to the NodC/HAS family. Homodimer; dimerization promotes enzymatic activity. Forms heterodimer with HAS3. Forms heterodimer with HAS1. Requires Mg(2+) as cofactor. Phosphorylation at Thr-328 is essential for hyaluronan synthase activity. Phosphorylation at Thr-110 is required for transport from ER to Golgi. Post-translationally, O-GlcNAcylation at Ser-221 increases the stability of HAS2 and plasma membrane localization. In terms of processing, ubiquitination at Lys-190; this ubiquitination is essential for hyaluronan synthase activity and homo- or hetero-oligomerization. Can also be poly-ubiquitinated. Deubiquitinated by USP17 and USP4. USP17 efficiently removes 'Lys-63'- and 'Lys-48'-linked polyubiquitin chains, whereas USP4 preferentially removes monoubiquitination and, partially, both 'Lys-63'- and 'Lys-48'-linked polyubiquitin chain. Expressed in fibroblasts.

The protein localises to the cell membrane. It is found in the endoplasmic reticulum membrane. The protein resides in the vesicle. It localises to the golgi apparatus membrane. Its subcellular location is the lysosome. The catalysed reaction is [hyaluronan](n) + UDP-N-acetyl-alpha-D-glucosamine = N-acetyl-beta-D-glucosaminyl-(1-&gt;4)-[hyaluronan](n) + UDP + H(+). It carries out the reaction N-acetyl-beta-D-glucosaminyl-(1-&gt;4)-[hyaluronan](n) + UDP-alpha-D-glucuronate = [hyaluronan](n+1) + UDP + H(+). Its pathway is glycan biosynthesis; hyaluronan biosynthesis. Its activity is regulated as follows. Regulated by several post-translational modifications such as ubiquitination/deubiquitination, phosphorylation and O-GlcNAcylation. The enzymatic activity depends on the availability of UDP-GlcUA and UDP-GlcNAc. Functionally, catalyzes the addition of GlcNAc or GlcUA monosaccharides to the nascent hyaluronan polymer. Therefore, it is essential to hyaluronan synthesis a major component of most extracellular matrices that has a structural role in tissues architectures and regulates cell adhesion, migration and differentiation. This is one of three isoenzymes responsible for cellular hyaluronan synthesis and it is particularly responsible for the synthesis of high molecular mass hyaluronan. The sequence is that of Hyaluronan synthase 2 from Homo sapiens (Human).